Reading from the N-terminus, the 357-residue chain is Alanine racemase (357 aa).

The Proton acceptor; specific for D-alanine role is filled by K33. N6-(pyridoxal phosphate)lysine is present on K33. Residue R130 participates in substrate binding. Y252 (proton acceptor; specific for L-alanine) is an active-site residue. M300 contacts substrate.

It belongs to the alanine racemase family. Pyridoxal 5'-phosphate serves as cofactor.

The enzyme catalyses L-alanine = D-alanine. It functions in the pathway amino-acid biosynthesis; D-alanine biosynthesis; D-alanine from L-alanine: step 1/1. In terms of biological role, catalyzes the interconversion of L-alanine and D-alanine. May also act on other amino acids. The chain is Alanine racemase (alr) from Acidiphilium cryptum (strain JF-5).